The chain runs to 438 residues: Probable trafficking protein particle complex subunit 13 homolog (438 aa).

It belongs to the TRAPPC13 family.

This chain is Probable trafficking protein particle complex subunit 13 homolog, found in Drosophila melanogaster (Fruit fly).